A 236-amino-acid polypeptide reads, in one-letter code: uncharacterized protein (236 aa).

A signal peptide spans 1–22; it reads MEFKMQKIILGMLVVTASNAMA.

This is an uncharacterized protein from Pasteurella multocida (strain Pm70).